An 817-amino-acid chain; its full sequence is Putative receptor protein kinase ZmPK1 (817 aa).

The first 28 residues, 1–28, serve as a signal peptide directing secretion; that stretch reads MPRPLAALLSTACILSFFIALFPRAASS. The Bulb-type lectin domain maps to 29-158; it reads RDILPLGSSL…GGNTVWQSFD (130 aa). At 29 to 472 the chain is on the extracellular side; sequence RDILPLGSSL…HKTGGGESKW (444 aa). N-linked (GlcNAc...) asparagine glycosylation is found at asparagine 83, asparagine 128, asparagine 228, and asparagine 279. One can recognise an EGF-like domain in the interval 292-328; the sequence is MTQPCNIHGLCGPNGICHYSPTPTCSCPPGYATRNPG. Cystine bridges form between cysteine 296–cysteine 308 and cysteine 302–cysteine 316. Residues asparagine 329 and asparagine 339 are each glycosylated (N-linked (GlcNAc...) asparagine). Positions 342–424 constitute a PAN domain; it reads CDRYDKRSMR…VRTIYLKLPT (83 aa). Cystine bridges form between cysteine 376–cysteine 398 and cysteine 384–cysteine 386. Asparagine 452 carries an N-linked (GlcNAc...) asparagine glycan. The chain crosses the membrane as a helical span at residues 473–498; the sequence is FYFYGFIAAFFVVEVSFISFAWFFVL. Residues 499 to 817 are Cytoplasmic-facing; the sequence is KRELRPSELW…AVQTLLSADD (319 aa). Residues 534–817 form the Protein kinase domain; the sequence is RKFKVELGRG…AVQTLLSADD (284 aa). ATP-binding positions include 540–548 and lysine 562; that span reads LGRGESGTV. The active-site Proton acceptor is the aspartate 658.

It belongs to the protein kinase superfamily. Ser/Thr protein kinase family. As to expression, expressed predominantly in the shoots and roots of young maize seedlings, and to a lesser extent in the silks.

The protein resides in the membrane. It carries out the reaction L-seryl-[protein] + ATP = O-phospho-L-seryl-[protein] + ADP + H(+). The enzyme catalyses L-threonyl-[protein] + ATP = O-phospho-L-threonyl-[protein] + ADP + H(+). Probable receptor. Interaction with a ligand in the extracellular domain triggers the protein kinase activity of the cytoplasmic domain. In Zea mays (Maize), this protein is Putative receptor protein kinase ZmPK1 (PK1).